Consider the following 287-residue polypeptide: Transmembrane protein 163 (287 aa).

Residues 1–63 form a disordered region; the sequence is METAAGSERR…ESGQFSDGLE (63 aa). Topologically, residues 1–86 are cytoplasmic; the sequence is METAAGSERR…HEAQNYRKKA (86 aa). Phosphoserine is present on residues Ser11, Ser53, Ser55, and Ser59. Positions 40 to 70 are required for interaction with MCOLN1; the sequence is EPPQPEEERQLRISESGQFSDGLEDRGLLES. A helical transmembrane segment spans residues 87-107; sequence LWVSWFSIIVTLALAVAAFTV. At 108–114 the chain is on the extracellular side; it reads SVMRYSA. Residues 115-135 traverse the membrane as a helical segment; the sequence is SAFGFAFDAILDVLSSAIVLW. Residues 136-148 lie on the Cytoplasmic side of the membrane; that stretch reads RYSNAAAVHSAHR. The chain crosses the membrane as a helical span at residues 149 to 169; sequence EYIACVILGVIFLLSSVCIVV. The Extracellular segment spans residues 170–185; the sequence is KAIHDLSTKLLPEVDD. Residues 186 to 206 form a helical membrane-spanning segment; that stretch reads FLFSVSILSGILCSILAVLKF. Residues 207-215 lie on the Cytoplasmic side of the membrane; sequence MLGKVLTSR. A helical transmembrane segment spans residues 216-236; sequence ALITDGFNSLVGGVMGFSILL. Residues 237 to 253 are Extracellular-facing; the sequence is SAEVFKHNSAVWYLDGS. A helical transmembrane segment spans residues 254–274; that stretch reads IGVLIGLTIFAYGVKLLIDMV. Residues 275 to 287 are Cytoplasmic-facing; sequence PRVRQTRHYEMFE.

It belongs to the TMEM163 family. As to quaternary structure, homodimer. Interacts with MCOLN1/TRPML1. Interacts with SLC30A1, SLC30A2, SLC30A3 and SLC30A4.

The protein resides in the cytoplasmic vesicle. It localises to the secretory vesicle. It is found in the synaptic vesicle membrane. Its subcellular location is the early endosome membrane. The protein localises to the late endosome membrane. The protein resides in the lysosome membrane. It localises to the cell membrane. The catalysed reaction is Zn(2+)(in) = Zn(2+)(out). Functionally, zinc ion transporter that mediates zinc efflux and plays a crucial role in intracellular zinc homeostasis. Binds the divalent cations Zn(2+), Ni(2+), and to a minor extent Cu(2+). Is a functional modulator of P2X purinoceptors, including P2RX1, P2RX3, P2RX4 and P2RX7. Plays a role in central nervous system development and is required for myelination, and survival and proliferation of oligodendrocytes. This chain is Transmembrane protein 163 (TMEM163), found in Bos taurus (Bovine).